The following is a 76-amino-acid chain: Cytochrome c oxidase subunit 6C-1 (76 aa).

Topologically, residues 4–14 are mitochondrial matrix; it reads GALLPKPQMHD. Residues 15–55 form a helical membrane-spanning segment; that stretch reads PLSKRLWVHIVGAFIVDLGVAAAHKFGAAKPRKKAYADFYR. Residues 56–76 are Mitochondrial intermembrane-facing; the sequence is NHDPMKDFDEMRKAGVFRSVK.

Belongs to the cytochrome c oxidase subunit 6c family. As to quaternary structure, component of the cytochrome c oxidase (complex IV, CIV), a multisubunit enzyme composed of 14 subunits. The complex is composed of a catalytic core of 3 subunits MT-CO1, MT-CO2 and MT-CO3, encoded in the mitochondrial DNA, and 11 supernumerary subunits COX4I, COX5A, COX5B, COX6A, COX6B, COX6C, COX7A, COX7B, COX7C, COX8 and NDUFA4, which are encoded in the nuclear genome. The complex exists as a monomer or a dimer and forms supercomplexes (SCs) in the inner mitochondrial membrane with NADH-ubiquinone oxidoreductase (complex I, CI) and ubiquinol-cytochrome c oxidoreductase (cytochrome b-c1 complex, complex III, CIII), resulting in different assemblies (supercomplex SCI(1)III(2)IV(1) and megacomplex MCI(2)III(2)IV(2)).

The protein localises to the mitochondrion inner membrane. Its pathway is energy metabolism; oxidative phosphorylation. Functionally, component of the cytochrome c oxidase, the last enzyme in the mitochondrial electron transport chain which drives oxidative phosphorylation. The respiratory chain contains 3 multisubunit complexes succinate dehydrogenase (complex II, CII), ubiquinol-cytochrome c oxidoreductase (cytochrome b-c1 complex, complex III, CIII) and cytochrome c oxidase (complex IV, CIV), that cooperate to transfer electrons derived from NADH and succinate to molecular oxygen, creating an electrochemical gradient over the inner membrane that drives transmembrane transport and the ATP synthase. Cytochrome c oxidase is the component of the respiratory chain that catalyzes the reduction of oxygen to water. Electrons originating from reduced cytochrome c in the intermembrane space (IMS) are transferred via the dinuclear copper A center (CU(A)) of subunit 2 and heme A of subunit 1 to the active site in subunit 1, a binuclear center (BNC) formed by heme A3 and copper B (CU(B)). The BNC reduces molecular oxygen to 2 water molecules using 4 electrons from cytochrome c in the IMS and 4 protons from the mitochondrial matrix. The protein is Cytochrome c oxidase subunit 6C-1 (Cox6c1) of Rattus norvegicus (Rat).